The primary structure comprises 377 residues: Protein RecA (377 aa).

76–83 serves as a coordination point for ATP; it reads GPESSGKT. Residues 346 to 377 are disordered; that stretch reads TNGNNGEDHEGTEPVEIEAEDAAPKKGKKGKH.

This sequence belongs to the RecA family.

It localises to the cytoplasm. Can catalyze the hydrolysis of ATP in the presence of single-stranded DNA, the ATP-dependent uptake of single-stranded DNA by duplex DNA, and the ATP-dependent hybridization of homologous single-stranded DNAs. It interacts with LexA causing its activation and leading to its autocatalytic cleavage. In Bdellovibrio bacteriovorus (strain ATCC 15356 / DSM 50701 / NCIMB 9529 / HD100), this protein is Protein RecA.